The primary structure comprises 253 residues: 5-oxoprolinase subunit A (253 aa).

The protein belongs to the LamB/PxpA family. In terms of assembly, forms a complex composed of PxpA, PxpB and PxpC.

It catalyses the reaction 5-oxo-L-proline + ATP + 2 H2O = L-glutamate + ADP + phosphate + H(+). In terms of biological role, catalyzes the cleavage of 5-oxoproline to form L-glutamate coupled to the hydrolysis of ATP to ADP and inorganic phosphate. This is 5-oxoprolinase subunit A from Bacillus cereus (strain B4264).